Reading from the N-terminus, the 267-residue chain is MTNNTDKQTLKKLERQILRKTAQAINQYNMIEDGDKIMVCLSGGKDSYCLLEMLLLLQKKAPISFEIIAVNLDQKQPGFPEEVLPNYLKNKGVEFHIIQRDTYSVVKRVIPEGKTTCGLCSRMRRGILYDFAEENSVTKVALGHHRDDIIETFFLNLFYNGSIKAMPAKLLSDDKRNIVIRPLAFVSEKETLEYSQLKEFPIIPCNLCGSQDNLQRVFIKDMLNRWEQNNPERKNVIFKALSNISPSQMLDKELFDFINISKDDIQR.

A PP-loop motif motif is present at residues 42–47; sequence SGGKDS. Residues C117, C120, and C208 each contribute to the [4Fe-4S] cluster site.

Belongs to the TtcA family. As to quaternary structure, homodimer. Mg(2+) is required as a cofactor. [4Fe-4S] cluster serves as cofactor.

It is found in the cytoplasm. It carries out the reaction cytidine(32) in tRNA + S-sulfanyl-L-cysteinyl-[cysteine desulfurase] + AH2 + ATP = 2-thiocytidine(32) in tRNA + L-cysteinyl-[cysteine desulfurase] + A + AMP + diphosphate + H(+). It participates in tRNA modification. In terms of biological role, catalyzes the ATP-dependent 2-thiolation of cytidine in position 32 of tRNA, to form 2-thiocytidine (s(2)C32). The sulfur atoms are provided by the cysteine/cysteine desulfurase (IscS) system. The polypeptide is tRNA-cytidine(32) 2-sulfurtransferase 1 (Francisella tularensis subsp. novicida (strain U112)).